Here is a 245-residue protein sequence, read N- to C-terminus: Tryptophan synthase alpha chain (245 aa).

Catalysis depends on proton acceptor residues Glu35 and Asp46.

This sequence belongs to the TrpA family. In terms of assembly, tetramer of two alpha and two beta chains.

The enzyme catalyses (1S,2R)-1-C-(indol-3-yl)glycerol 3-phosphate + L-serine = D-glyceraldehyde 3-phosphate + L-tryptophan + H2O. The protein operates within amino-acid biosynthesis; L-tryptophan biosynthesis; L-tryptophan from chorismate: step 5/5. The alpha subunit is responsible for the aldol cleavage of indoleglycerol phosphate to indole and glyceraldehyde 3-phosphate. This chain is Tryptophan synthase alpha chain, found in Sulfurisphaera tokodaii (strain DSM 16993 / JCM 10545 / NBRC 100140 / 7) (Sulfolobus tokodaii).